The sequence spans 448 residues: Rhodopsin (448 aa).

The Extracellular segment spans residues 2 to 33 (GRDLRDNETWWYNPSIVVHPHWREFDQVPDAV). N8 carries an N-linked (GlcNAc...) asparagine glycan. A helical transmembrane segment spans residues 34-58 (YYSLGIFIGICGIIGCGGNGIVIYL). Residues 59 to 70 (FTKTKSLQTPAN) are Cytoplasmic-facing. The helical transmembrane segment at 71-97 (MFIINLAFSDFTFSLVNGFPLMTISCF) threads the bilayer. Topologically, residues 98 to 109 (LKKWIFGFAACK) are extracellular. The cysteines at positions 108 and 186 are disulfide-linked. The helical transmembrane segment at 110 to 131 (VYGFIGGIFGFMSIMTMAMISI) threads the bilayer. Residues 132-151 (DRYNVIGRPMAASKKMSHRR) are Cytoplasmic-facing. The chain crosses the membrane as a helical span at residues 152–172 (AFIMIIFVWLWSVLWAIGPIF). Topologically, residues 173-199 (GWGAYTLEGVLCNCSFDYISRDSTTRS) are extracellular. Residues 200 to 224 (NILCMFILGFFGPILIIFFCYFNIV) form a helical membrane-spanning segment. Over 225–261 (MSVSNHEKEMAAMAKRLNAKELRKAQAGANAEMRLAK) the chain is Cytoplasmic. The chain crosses the membrane as a helical span at residues 262-283 (ISIVIVSQFLLSWSPYAVVALL). At 284 to 293 (AQFGPLEWVT) the chain is on the extracellular side. A helical transmembrane segment spans residues 294 to 315 (PYAAQLPVMFAKASAIHNPMIY). K305 is subject to N6-(retinylidene)lysine. Residues 316–448 (SVSHPKFREA…QGVDNQAYQA (133 aa)) lie on the Cytoplasmic side of the membrane. S-palmitoyl cysteine attachment occurs at residues C336 and C337. Over residues 343 to 352 (ETEDDKDAET) the composition is skewed to acidic residues. Residues 343–448 (ETEDDKDAET…QGVDNQAYQA (106 aa)) are disordered. The segment covering 359 to 391 (SSDAAPSADAAQMKEMMAMMQKMQQQQAAYPPQ) has biased composition (low complexity). The segment covering 392-437 (GYAPPPQGYPPQGYPPQGYPPQGYPPQGYPPPPQGAPPQGAPPAAP) has biased composition (pro residues).

This sequence belongs to the G-protein coupled receptor 1 family. Opsin subfamily. Contains one covalently linked retinal chromophore. Upon light absorption, the covalently bound 11-cis-retinal is converted to all-trans-retinal. After hydrolysis of the Schiff base and release of the covalently bound all-trans-retinal, active rhodopsin is regenerated by binding of a fresh molecule of 11-cis-retinal. As to expression, retina, rhabdomere membrane of photoreceptor cells (at protein level).

It localises to the cell projection. It is found in the rhabdomere membrane. Photoreceptor required for image-forming vision at low light intensity. Light-induced isomerization of 11-cis to all-trans retinal triggers a conformational change that activates signaling via G-proteins. Signaling mediates the activation of phospholipase C. Subsequent receptor phosphorylation mediates displacement of the bound G-protein alpha subunit by arrestin and terminates signaling. This is Rhodopsin (RHO) from Todarodes pacificus (Japanese flying squid).